A 642-amino-acid polypeptide reads, in one-letter code: Threonine--tRNA ligase (642 aa).

A TGS domain is found at 1-61 (MPVITLPDGS…SEDANLVIFT (61 aa)). Residues 243–534 (DHRKLAKKFD…LIEHYEGSFP (292 aa)) form a catalytic region. The Zn(2+) site is built by cysteine 334, histidine 385, and histidine 511.

This sequence belongs to the class-II aminoacyl-tRNA synthetase family. Homodimer. It depends on Zn(2+) as a cofactor.

It localises to the cytoplasm. The catalysed reaction is tRNA(Thr) + L-threonine + ATP = L-threonyl-tRNA(Thr) + AMP + diphosphate + H(+). In terms of biological role, catalyzes the attachment of threonine to tRNA(Thr) in a two-step reaction: L-threonine is first activated by ATP to form Thr-AMP and then transferred to the acceptor end of tRNA(Thr). Also edits incorrectly charged L-seryl-tRNA(Thr). In Cellvibrio japonicus (strain Ueda107) (Pseudomonas fluorescens subsp. cellulosa), this protein is Threonine--tRNA ligase.